We begin with the raw amino-acid sequence, 199 residues long: MARCKS-related protein (199 aa).

A disordered region spans residues 1-199 (MGSQSSKAPR…PTPAGAEQNE (199 aa)). Residue Gly-2 is the site of N-myristoyl glycine attachment. The residue at position 14 (Thr-14) is a Phosphothreonine. Residues 16–26 (EEAAGASPAKA) are compositionally biased toward low complexity. A phosphoserine mark is found at Ser-22, Ser-36, and Ser-48. A compositionally biased stretch (low complexity) spans 53-64 (GTDEAAGATGDA). The residue at position 71 (Ser-71) is a Phosphoserine. Residues 76-85 (AKGDAPPKET) show a composition bias toward basic and acidic residues. At Thr-85 the chain carries Phosphothreonine. Positions 86–98 (PKKKKKFSFKKPF) are enriched in basic residues. The tract at residues 87–110 (KKKKKFSFKKPFKLSGLSFKRNRK) is effector domain involved in lipid-binding and calmodulin-binding. 3 positions are modified to phosphoserine; by PKC: Ser-93, Ser-101, and Ser-104. Ser-119 bears the Phosphoserine mark. Ser-120 bears the Phosphoserine; by MAPK8 mark. Ser-135 is subject to Phosphoserine. Thr-148 carries the phosphothreonine; by MAPK8 modification. Residue Ser-151 is modified to Phosphoserine. The segment covering 156–167 (AKGAEAGAACKG) has biased composition (low complexity). Position 170 is a phosphothreonine (Thr-170). A compositionally biased stretch (low complexity) spans 181 to 199 (STPSGPESGPTPAGAEQNE). Thr-182 is modified (phosphothreonine; by MAPK8). Thr-191 is modified (phosphothreonine).

This sequence belongs to the MARCKS family. Binds to filamentous actin (F-actin), but not to monomeric G-actin, independently of its phosphorylation status. Interacts with calmodulin. In terms of processing, phosphorylated. Phosphorylation at Ser-120 and Thr-182 is non-redundantly catalyzed by MAPK8 in vivo. Phosphorylation at Thr-148 is preferentially catalyzed by MAPK8 in vivo, but this modification can also be catalyzed by other kinases in the absence of MAPK8. May be phosphorylated by protein kinase C, which disrupts the interaction with calmodulin.

Its subcellular location is the cytoplasm. It is found in the cytoskeleton. It localises to the cell membrane. Its function is as follows. Controls cell movement by regulating actin cytoskeleton homeostasis and filopodium and lamellipodium formation. When unphosphorylated, induces cell migration. When phosphorylated by MAPK8, induces actin bundles formation and stabilization, thereby reducing actin plasticity, hence restricting cell movement, including neuronal migration. May be involved in coupling the protein kinase C and calmodulin signal transduction systems. This Oryctolagus cuniculus (Rabbit) protein is MARCKS-related protein (MARCKSL1).